Here is a 211-residue protein sequence, read N- to C-terminus: Troponin I, cardiac muscle (211 aa).

The residue at position 1 (Ala-1) is an N-acetylalanine. The tract at residues 1 to 43 is disordered; it reads ADESRDAAGEARPAPAPVRRRSSANYRAYATEPHAKSKKKISA. The residue at position 4 (Ser-4) is a Phosphoserine. Ser-22 is modified (phosphoserine; by PHK, PKA and PKD/PRKD1). The residue at position 23 (Ser-23) is a Phosphoserine; by PKA and PKD/PRKD1. Tyr-26 carries the phosphotyrosine modification. A Phosphothreonine; by STK4/MST1 modification is found at Thr-31. Residues 32–79 form an involved in binding TNC region; that stretch reads EPHAKSKKKISASRKLQLKTLMLQIAKQELEREAEERRGEKGRALSTR. 2 positions are modified to phosphoserine; by PKC/PRKCE: Ser-42 and Ser-44. At Thr-51 the chain carries Phosphothreonine; by STK4/MST1. Ser-77 is subject to Phosphoserine. A Phosphothreonine modification is found at Thr-78. Phosphothreonine; by STK4/MST1 occurs at positions 129 and 143. Residues 129 to 150 are involved in binding TNC and actin; sequence TQKIFDLRGKFKRPTLRLRVRI. Ser-151 is modified (phosphoserine; by PAK3). Thr-182 carries the phosphothreonine modification. At Ser-200 the chain carries Phosphoserine.

This sequence belongs to the troponin I family. Interacts with TRIM63. Binds to actin and tropomyosin. Interacts with STK4/MST1. In terms of processing, phosphorylated at Ser-22 and Ser-23 by PRKD1; phosphorylation reduces myofilament calcium sensitivity. Phosphorylated preferentially at Thr-31. Phosphorylation by STK4/MST1 alters its binding affinity to TNNC1 (cardiac Tn-C) and TNNT2 (cardiac Tn-T). Phosphorylated at Ser-42 and Ser-44 by PRKCE; phosphorylation increases myocardium contractile dysfunction. Ser-22 is one of three sites in the region of residues 1-48 that are phosphorylated by phosphorylase kinase.

Functionally, troponin I is the inhibitory subunit of troponin, the thin filament regulatory complex which confers calcium-sensitivity to striated muscle actomyosin ATPase activity. This is Troponin I, cardiac muscle (TNNI3) from Oryctolagus cuniculus (Rabbit).